Reading from the N-terminus, the 327-residue chain is GTP 3',8-cyclase (327 aa).

The Radical SAM core domain maps to 4 to 226 (AFARDIHYLR…LRLGDHPGIR (223 aa)). A GTP-binding site is contributed by arginine 13. Residues cysteine 20 and cysteine 24 each coordinate [4Fe-4S] cluster. Residue tyrosine 26 participates in S-adenosyl-L-methionine binding. Residue cysteine 27 coordinates [4Fe-4S] cluster. Arginine 63 contacts GTP. An S-adenosyl-L-methionine-binding site is contributed by glycine 67. Threonine 94 contributes to the GTP binding site. Serine 118 provides a ligand contact to S-adenosyl-L-methionine. Residue lysine 155 coordinates GTP. Methionine 189 contributes to the S-adenosyl-L-methionine binding site. Residues cysteine 254 and cysteine 257 each contribute to the [4Fe-4S] cluster site. Residue 259–261 (RLR) participates in GTP binding. A [4Fe-4S] cluster-binding site is contributed by cysteine 271.

This sequence belongs to the radical SAM superfamily. MoaA family. Monomer and homodimer. [4Fe-4S] cluster serves as cofactor.

The enzyme catalyses GTP + AH2 + S-adenosyl-L-methionine = (8S)-3',8-cyclo-7,8-dihydroguanosine 5'-triphosphate + 5'-deoxyadenosine + L-methionine + A + H(+). The protein operates within cofactor biosynthesis; molybdopterin biosynthesis. In terms of biological role, catalyzes the cyclization of GTP to (8S)-3',8-cyclo-7,8-dihydroguanosine 5'-triphosphate. This chain is GTP 3',8-cyclase, found in Heliobacterium modesticaldum (strain ATCC 51547 / Ice1).